Consider the following 94-residue polypeptide: MFTINAEVRKEQGKGASRRLRTANKFPAIIYGGSEAPIAIELDHDQVMNMQAKAEFYSEVLTLVVDGKEVKVKAQAVQRHAYKPKLTHIDFVRA.

This sequence belongs to the bacterial ribosomal protein bL25 family. Part of the 50S ribosomal subunit; part of the 5S rRNA/L5/L18/L25 subcomplex. Contacts the 5S rRNA. Binds to the 5S rRNA independently of L5 and L18.

This is one of the proteins that binds to the 5S RNA in the ribosome where it forms part of the central protuberance. The sequence is that of Large ribosomal subunit protein bL25 from Salmonella gallinarum (strain 287/91 / NCTC 13346).